We begin with the raw amino-acid sequence, 227 residues long: Class I hydrophobin A (227 aa).

A signal peptide spans 1–18; it reads MQFSLSAIVLGLAATVYA. N50 carries N-linked (GlcNAc...) asparagine glycosylation. 3 cysteine pairs are disulfide-bonded: C60–C138, C68–C132, and C69–C109.

This sequence belongs to the fungal hydrophobin family.

It is found in the secreted. Its subcellular location is the cell wall. Functionally, aerial growth, conidiation, and dispersal of filamentous fungi in the environment rely upon a capability of their secreting small amphipathic proteins called hydrophobins (HPBs) with low sequence identity. Class I can self-assemble into an outermost layer of rodlet bundles on aerial cell surfaces, conferring cellular hydrophobicity that supports fungal growth, development and dispersal; whereas Class II form highly ordered films at water-air interfaces through intermolecular interactions but contribute nothing to the rodlet structure. In P.expansum, hydrophobins contribute to germination, tolerance to cold stress and mycotoxins patulin and citrinin production. HfbA and HfbB are essential for fungal surface hydrophobicity and HfbA mediates air and water dispersal. The protein is Class I hydrophobin A of Penicillium expansum (Blue mold rot fungus).